The primary structure comprises 360 residues: Secreted LysM effector LysM2 (360 aa).

A signal peptide spans 1–21; that stretch reads MKISSLSILPLLGVVSAGIHG. Residues 37-85 enclose the LysM 1 domain; that stretch reads TWYLDLVDDSYTCENIESQWDLSHEAFVAWNPGVKKDCSGLKVGLSVCV. Low complexity predominate over residues 94–113; the sequence is ATPTSEASTSSETSSASPTA. Positions 94–125 are disordered; it reads ATPTSEASTSSETSSASPTASRPPLPSPTQDG. The N-linked (GlcNAc...) asparagine glycan is linked to N129. Positions 132–179 constitute a LysM 2 domain; sequence KFHQAVSGDTCSKIISRYKPITLDQFIEWNPALEKDCSGLWSGYYYCV. N-linked (GlcNAc...) asparagine glycosylation is present at N204. LysM domains are found at residues 225–272 and 311–357; these read RWHK…YYCI and KWHQ…YVCV.

The protein belongs to the secreted LysM effector family.

The protein localises to the secreted. It is found in the cell wall. In terms of biological role, secreted effector that binds two substrates, chitin and N-linked oligosaccharides associated with human skin glycoproteins. Could provide the pathogen with three important functions including shielding host cell wall chitin from the human immune system, shielding the pathogen's glycoproteins from host degradation and immune surveillance, and helping facilitate pathogen adhesion to human skin. This Trichophyton rubrum (strain ATCC MYA-4607 / CBS 118892) (Athlete's foot fungus) protein is Secreted LysM effector LysM2.